A 763-amino-acid chain; its full sequence is Phosphoglycerol transferase I (763 aa).

4 helical membrane passes run 1–21 (MSELLSVALFLASVLIYAWKA), 26–46 (WWFAATLTVLGLFVILNITLY), 77–97 (ILPGIGIALALVAVFGALGWV), and 108–128 (VGYSLLALLLALGSVDASPAF).

Belongs to the OpgB family.

The protein resides in the cell inner membrane. The catalysed reaction is a phosphatidylglycerol + a membrane-derived-oligosaccharide D-glucose = a 1,2-diacyl-sn-glycerol + a membrane-derived-oligosaccharide 6-(glycerophospho)-D-glucose.. The protein operates within glycan metabolism; osmoregulated periplasmic glucan (OPG) biosynthesis. Functionally, transfers a phosphoglycerol residue from phosphatidylglycerol to the membrane-bound nascent glucan backbones. The chain is Phosphoglycerol transferase I from Salmonella heidelberg (strain SL476).